Here is a 197-residue protein sequence, read N- to C-terminus: Peptide deformylase (197 aa).

Cys106 and His148 together coordinate Fe cation. Glu149 is a catalytic residue. His152 provides a ligand contact to Fe cation.

It belongs to the polypeptide deformylase family. Requires Fe(2+) as cofactor.

The catalysed reaction is N-terminal N-formyl-L-methionyl-[peptide] + H2O = N-terminal L-methionyl-[peptide] + formate. Its function is as follows. Removes the formyl group from the N-terminal Met of newly synthesized proteins. Requires at least a dipeptide for an efficient rate of reaction. N-terminal L-methionine is a prerequisite for activity but the enzyme has broad specificity at other positions. The polypeptide is Peptide deformylase (Mycobacterium sp. (strain JLS)).